The primary structure comprises 304 residues: HTH-type transcriptional regulator TtuA (304 aa).

Positions 1-58 (MELEQLKCFVAAAEELHFGRAAQKMGILPASLGRHLRLLEESLGTRLMSRTTRSVALT) constitute an HTH lysR-type domain. The segment at residues 18–37 (FGRAAQKMGILPASLGRHLR) is a DNA-binding region (H-T-H motif).

The protein belongs to the LysR transcriptional regulatory family.

In terms of biological role, transcriptional regulator of the ttuABCDE tartrate utilization operon. The chain is HTH-type transcriptional regulator TtuA (ttuA) from Agrobacterium vitis (Rhizobium vitis).